The following is a 336-amino-acid chain: Delta(1)-pyrroline-2-carboxylate reductase (336 aa).

The active-site Charge relay system is Ser47. His48 (proton donor) is an active-site residue. Residue Arg52 participates in substrate binding. 120–124 provides a ligand contact to NADP(+); sequence HFSAL. A substrate-binding site is contributed by Thr160. Residue 178–180 coordinates NADP(+); the sequence is DFA. Residue 186–187 participates in substrate binding; it reads RG. The Charge relay system role is filled by Asp188. Residues 229 to 230 and 304 to 310 contribute to the NADP(+) site; these read HK and RLPSQRR.

It belongs to the LDH2/MDH2 oxidoreductase family. In terms of assembly, homodimer.

It carries out the reaction L-proline + NAD(+) = 1-pyrroline-2-carboxylate + NADH + H(+). The catalysed reaction is L-proline + NADP(+) = 1-pyrroline-2-carboxylate + NADPH + H(+). Its function is as follows. Catalyzes the reduction of Delta(1)-pyrroline-2-carboxylate (Pyr2C) to L-proline, using NADPH as the electron donor. May be involved in a degradation pathway that converts trans-3-hydroxy-L-proline (t3LHyp) to L-proline. This is Delta(1)-pyrroline-2-carboxylate reductase from Pseudomonas fluorescens (strain ATCC BAA-477 / NRRL B-23932 / Pf-5).